The chain runs to 429 residues: tRNA(Ile2) 2-agmatinylcytidine synthetase TiaS (429 aa).

A disordered region spans residues 403-429 (KPPERPLHPSKSLEPPSTPIHSDTISL).

The protein belongs to the TiaS family.

It localises to the cytoplasm. The catalysed reaction is cytidine(34) in tRNA(Ile2) + agmatine + ATP + H2O = 2-agmatinylcytidine(34) in tRNA(Ile2) + AMP + 2 phosphate + 2 H(+). ATP-dependent agmatine transferase that catalyzes the formation of 2-agmatinylcytidine (agm2C) at the wobble position (C34) of tRNA(Ile2), converting the codon specificity from AUG to AUA. The sequence is that of tRNA(Ile2) 2-agmatinylcytidine synthetase TiaS from Hyperthermus butylicus (strain DSM 5456 / JCM 9403 / PLM1-5).